We begin with the raw amino-acid sequence, 185 residues long: Ribosome-recycling factor (185 aa).

The protein belongs to the RRF family.

It localises to the cytoplasm. In terms of biological role, responsible for the release of ribosomes from messenger RNA at the termination of protein biosynthesis. May increase the efficiency of translation by recycling ribosomes from one round of translation to another. The chain is Ribosome-recycling factor from Bacillus cereus (strain B4264).